We begin with the raw amino-acid sequence, 284 residues long: Bifunctional protein FolD (284 aa).

Residues 165 to 167 (GRS) and S190 each bind NADP(+).

It belongs to the tetrahydrofolate dehydrogenase/cyclohydrolase family. As to quaternary structure, homodimer.

It catalyses the reaction (6R)-5,10-methylene-5,6,7,8-tetrahydrofolate + NADP(+) = (6R)-5,10-methenyltetrahydrofolate + NADPH. The catalysed reaction is (6R)-5,10-methenyltetrahydrofolate + H2O = (6R)-10-formyltetrahydrofolate + H(+). The protein operates within one-carbon metabolism; tetrahydrofolate interconversion. Its function is as follows. Catalyzes the oxidation of 5,10-methylenetetrahydrofolate to 5,10-methenyltetrahydrofolate and then the hydrolysis of 5,10-methenyltetrahydrofolate to 10-formyltetrahydrofolate. The chain is Bifunctional protein FolD from Streptococcus mutans serotype c (strain ATCC 700610 / UA159).